A 299-amino-acid chain; its full sequence is UDP-N-acetylenolpyruvoylglucosamine reductase (299 aa).

The 162-residue stretch at 31–192 (VGGVAEVVFK…VDATFVGACG (162 aa)) folds into the FAD-binding PCMH-type domain. The active site involves Arg172. Catalysis depends on Ser221, which acts as the Proton donor. The active site involves Glu291.

The protein belongs to the MurB family. FAD serves as cofactor.

The protein localises to the cytoplasm. It catalyses the reaction UDP-N-acetyl-alpha-D-muramate + NADP(+) = UDP-N-acetyl-3-O-(1-carboxyvinyl)-alpha-D-glucosamine + NADPH + H(+). Its pathway is cell wall biogenesis; peptidoglycan biosynthesis. In terms of biological role, cell wall formation. The polypeptide is UDP-N-acetylenolpyruvoylglucosamine reductase (Anaplasma marginale (strain St. Maries)).